We begin with the raw amino-acid sequence, 853 residues long: Stachyose synthase (853 aa).

The propeptide occupies 1-11 (MAPPLNSTTSN).

The protein belongs to the glycosyl hydrolases 36 family.

It localises to the cytoplasm. The enzyme catalyses alpha-D-galactosyl-(1-&gt;3)-1D-myo-inositol + raffinose = stachyose + myo-inositol. It participates in glycan metabolism; stachyose biosynthesis; stachyose from raffinose: step 1/1. Catalyzes stachyose synthesis by transfer of a galactosyl moiety from galactinol to raffinose. Also catalyzes verbascose synthesis by galactosyl transfer from galactinol to stachyose or from one stachyose molecule to another. Oligosaccharides of the raffinose family play a protective role in maturation drying of seeds. They may act as cryoprotectants in frost-hardy plants. The protein is Stachyose synthase (STS1) of Pisum sativum (Garden pea).